Reading from the N-terminus, the 227-residue chain is NADH-quinone oxidoreductase subunit C (227 aa).

Belongs to the complex I 30 kDa subunit family. NDH-1 is composed of 14 different subunits. Subunits NuoB, C, D, E, F, and G constitute the peripheral sector of the complex.

Its subcellular location is the cell inner membrane. The catalysed reaction is a quinone + NADH + 5 H(+)(in) = a quinol + NAD(+) + 4 H(+)(out). NDH-1 shuttles electrons from NADH, via FMN and iron-sulfur (Fe-S) centers, to quinones in the respiratory chain. The immediate electron acceptor for the enzyme in this species is believed to be ubiquinone. Couples the redox reaction to proton translocation (for every two electrons transferred, four hydrogen ions are translocated across the cytoplasmic membrane), and thus conserves the redox energy in a proton gradient. In Legionella pneumophila (strain Paris), this protein is NADH-quinone oxidoreductase subunit C.